Reading from the N-terminus, the 297-residue chain is Transmembrane protein 169 (297 aa).

The disordered stretch occupies residues 1–84; the sequence is MEEPALVEGQ…PKEEEGDDFI (84 aa). The Extracellular segment spans residues 1 to 159; it reads MEEPALVEGQ…CQLGADRGPH (159 aa). Polar residues predominate over residues 9–18; that stretch reads GQSQLPSPHH. The segment covering 60-84 has biased composition (acidic residues); that stretch reads ETLDEEPGESEGGDQPKEEEGDDFI. Residues 160–180 form a helical membrane-spanning segment; the sequence is VVLWTLVCLPVVFLLSFVVSF. The Cytoplasmic segment spans residues 181-210; sequence YYGTITWYNIFLVYNEERTFWHKISCCPCL. Residues 211-231 traverse the membrane as a helical segment; that stretch reads ILCYPVLIMAMASSLGLYAAV. Residues 232–297 lie on the Extracellular side of the membrane; the sequence is VQLSWSWEAW…ATQEIETSAV (66 aa).

It is found in the membrane. The polypeptide is Transmembrane protein 169 (TMEM169) (Bos taurus (Bovine)).